The primary structure comprises 250 residues: 5-oxoprolinase subunit A (250 aa).

Belongs to the LamB/PxpA family. Forms a complex composed of PxpA, PxpB and PxpC.

The enzyme catalyses 5-oxo-L-proline + ATP + 2 H2O = L-glutamate + ADP + phosphate + H(+). Its function is as follows. Catalyzes the cleavage of 5-oxoproline to form L-glutamate coupled to the hydrolysis of ATP to ADP and inorganic phosphate. The chain is 5-oxoprolinase subunit A from Streptomyces griseus subsp. griseus (strain JCM 4626 / CBS 651.72 / NBRC 13350 / KCC S-0626 / ISP 5235).